The following is a 421-amino-acid chain: NADH-dependent phenylglyoxylate dehydrogenase subunit epsilon (421 aa).

FAD contacts are provided by residues 15–18 (SSHA), 39–40 (TR), and 279–297 (ATAQ…NAIL).

The protein belongs to the FAD-dependent oxidoreductase family. In terms of assembly, dimer of heteropentamers composed of an alpha (PadG), a beta (PadI), a gamma (PadE), a delta (PadF) and an epsilon (PadH) subunit. The cofactor is FAD.

The enzyme catalyses phenylglyoxylate + NAD(+) + CoA = benzoyl-CoA + CO2 + NADH. Activated by magnesium ions and thiamine diphosphate. In terms of biological role, involved in the anaerobic metabolism of phenylalanine and phenylacetate. Catalyzes the oxidative decarboxylation of phenylglyoxylate to benzoyl-CoA and CO(2). It can also react slowly with 2-oxo-3-methylbutanoate and use different electron acceptors such as benzyl viologen, methyl viologen, FAD or FMN, but NAD seems to be the physiological electron acceptor. Also catalyzes an isotope exchange between CO(2) and the carboxyl group which proves partial or complete reversibility of the oxidative decarboxylation reaction. This Aromatoleum evansii (Azoarcus evansii) protein is NADH-dependent phenylglyoxylate dehydrogenase subunit epsilon (padH).